The primary structure comprises 384 residues: H-2 class I histocompatibility antigen, TLA(B) alpha chain (384 aa).

The N-terminal stretch at 1-26 (MRMGTPVPGTLLILLAASQGQTQTCP) is a signal peptide. Positions 27–116 (GSHSLRYFYT…MLDYYNLSQN (90 aa)) are alpha-1. Over 27–314 (GSHSLRYFYT…TSMPNRTTVR (288 aa)) the chain is Extracellular. N-linked (GlcNAc...) asparagine glycosylation is found at asparagine 63, asparagine 112, and asparagine 116. The segment at 117-208 (GSHTIQVMYG…ENRKKTQECT (92 aa)) is alpha-2. Intrachain disulfides connect cysteine 127–cysteine 190 and cysteine 229–cysteine 285. An alpha-3 region spans residues 209-300 (DPPKTHVTHH…GLPEPLTLRW (92 aa)). The Ig-like C1-type domain occupies 211 to 299 (PKTHVTHHPR…EGLPEPLTLR (89 aa)). The interval 301 to 314 (EPPQTSMPNRTTVR) is connecting peptide. N-linked (GlcNAc...) asparagine glycosylation occurs at asparagine 309. Residues 315 to 334 (ALLGAMIILGFMSGSVMMWM) form a helical membrane-spanning segment. Over 335–384 (RKNNGGNGDDNTAAYQNEREHLSLDPRAESEALGVEAGMKDLPSAPPLVS) the chain is Cytoplasmic. Basic and acidic residues predominate over residues 354–364 (EHLSLDPRAES). The tract at residues 354 to 384 (EHLSLDPRAESEALGVEAGMKDLPSAPPLVS) is disordered.

Belongs to the MHC class I family. As to quaternary structure, heterodimer of an alpha chain and a beta chain (beta-2-microglobulin). In terms of tissue distribution, TL antigens are only expressed on thymocytes, activated T-lymphocytes and on some thymic leukemias.

It is found in the membrane. In terms of biological role, involved in the presentation of foreign antigens to the immune system. The protein is H-2 class I histocompatibility antigen, TLA(B) alpha chain (H2-T3) of Mus musculus (Mouse).